The chain runs to 547 residues: DNA ligase (547 aa).

Glu244 lines the ATP pocket. Catalysis depends on Lys246, which acts as the N6-AMP-lysine intermediate. Residues Arg251, Arg266, Glu295, Phe334, Arg405, and Lys411 each coordinate ATP.

The protein belongs to the ATP-dependent DNA ligase family. Mg(2+) serves as cofactor.

It carries out the reaction ATP + (deoxyribonucleotide)n-3'-hydroxyl + 5'-phospho-(deoxyribonucleotide)m = (deoxyribonucleotide)n+m + AMP + diphosphate.. DNA ligase that seals nicks in double-stranded DNA during DNA replication, DNA recombination and DNA repair. In Methanospirillum hungatei JF-1 (strain ATCC 27890 / DSM 864 / NBRC 100397 / JF-1), this protein is DNA ligase.